A 1529-amino-acid chain; its full sequence is ABC multidrug transporter AFR2 (1529 aa).

The segment covering 1-10 (MAFAGVGQGL) has biased composition (gly residues). Residues 1-21 (MAFAGVGQGLGTYDRTEQTSG) form a disordered region. The region spanning 144 to 394 (GALRDLISNR…FVDMGFHCPS (251 aa)) is the ABC transporter 1 domain. 2 N-linked (GlcNAc...) asparagine glycosylation sites follow: N235 and N318. 5 helical membrane-spanning segments follow: residues 505–525 (LTLT…SVFY), 539–559 (ALLF…ILIL), 589–609 (IPYK…MTNL), 614–634 (GPYF…SMLF), and 648–668 (LAPA…AVNV). A glycan (N-linked (GlcNAc...) asparagine) is linked at N742. A helical membrane pass occupies residues 757–777 (GILIGFFLFFTAIYMTATEFI). The region spanning 845 to 1087 (FSWKDVVYDI…ILIDYFEKNG (243 aa)) is the ABC transporter 2 domain. 881-888 (GVSGAGKT) lines the ATP pocket. 5 consecutive transmembrane segments (helical) span residues 1193-1213 (YIWS…FSFF), 1227-1247 (FSVF…MPNF), 1268-1288 (IFIL…GAVI), 1314-1334 (LMFL…IMIV), and 1353-1373 (MCLI…FWMF). N1434 carries N-linked (GlcNAc...) asparagine glycosylation. Residues 1465–1485 (FGLLWAYVVFNIIAAVGIYWL) traverse the membrane as a helical segment. A disordered region spans residues 1493–1529 (GKEQASEPEGVQEKLVPAQSSEKKRESVSRGSESTAA).

The protein belongs to the ABC transporter superfamily. ABCG family. PDR (TC 3.A.1.205) subfamily.

Its subcellular location is the cell membrane. It carries out the reaction itraconazole(in) + ATP + H2O = itraconazole(out) + ADP + phosphate + H(+). The catalysed reaction is voriconazole(in) + ATP + H2O = voriconazole(out) + ADP + phosphate + H(+). The enzyme catalyses fluconazole(in) + ATP + H2O = fluconazole(out) + ADP + phosphate + H(+). Pleiotropic ABC efflux transporter that confers resistance to structurally and functionally unrelated compounds including azoles such as fluconazole (FLC), itraconazole (ITC), posaconazole (POS), and voriconazole (VRC). The polypeptide is ABC multidrug transporter AFR2 (Cryptococcus neoformans var. grubii serotype A (strain H99 / ATCC 208821 / CBS 10515 / FGSC 9487) (Filobasidiella neoformans var. grubii)).